The chain runs to 132 residues: Translation initiation factor 5A (132 aa).

Lysine 36 carries the post-translational modification Hypusine.

It belongs to the eIF-5A family.

It localises to the cytoplasm. In terms of biological role, functions by promoting the formation of the first peptide bond. This is Translation initiation factor 5A from Methanosphaera stadtmanae (strain ATCC 43021 / DSM 3091 / JCM 11832 / MCB-3).